We begin with the raw amino-acid sequence, 483 residues long: Regulatory protein ViaA (483 aa).

The protein belongs to the ViaA family. Homodimer. Interacts with RavA.

It is found in the cytoplasm. Component of the RavA-ViaA chaperone complex, which may act on the membrane to optimize the function of some of the respiratory chains. ViaA stimulates the ATPase activity of RavA. This Salmonella paratyphi A (strain ATCC 9150 / SARB42) protein is Regulatory protein ViaA.